The following is a 179-amino-acid chain: Large ribosomal subunit protein uL5 (179 aa).

In terms of assembly, contacts the P site tRNA. Forms a bridge to the 30S subunit in the 70S ribosome. Part of the 50S ribosomal subunit. Part of the 5S rRNA/L5/L18 subcomplex; in this organism only 2 proteins, L5 and L18 have been shown to be part of the 5S rRNA subcomplex, unlike E.coli and T.thermophilus where L25 (TL5) is also found. Has been shown to bind 5S rRNA.

Functionally, this is one of the proteins that bind and probably mediate the attachment of the 5S RNA into the large ribosomal subunit, where it forms part of the central protuberance. In the 70S ribosome it contacts protein S13 of the 30S subunit (bridge B1b), connecting the 2 subunits; this bridge is implicated in subunit movement. Contacts the P site tRNA; the 5S rRNA and some of its associated proteins might help stabilize positioning of ribosome-bound tRNAs. The chain is Large ribosomal subunit protein uL5 (rplE) from Geobacillus stearothermophilus (Bacillus stearothermophilus).